The primary structure comprises 101 residues: DNA-directed RNA polymerase subunit beta (101 aa).

Positions 74 to 101 are disordered; that stretch reads KRRLSALGPGGLSRERAGLEVRDVHSSH. The segment covering 86 to 101 has biased composition (basic and acidic residues); the sequence is SRERAGLEVRDVHSSH.

This sequence belongs to the RNA polymerase beta chain family. As to quaternary structure, the RNAP catalytic core consists of 2 alpha, 1 beta, 1 beta' and 1 omega subunit. When a sigma factor is associated with the core the holoenzyme is formed, which can initiate transcription.

The enzyme catalyses RNA(n) + a ribonucleoside 5'-triphosphate = RNA(n+1) + diphosphate. In terms of biological role, DNA-dependent RNA polymerase catalyzes the transcription of DNA into RNA using the four ribonucleoside triphosphates as substrates. In Mycolicibacterium peregrinum (Mycobacterium peregrinum), this protein is DNA-directed RNA polymerase subunit beta (rpoB).